The chain runs to 143 residues: Transcriptional regulator SlyA (143 aa).

One can recognise an HTH marR-type domain in the interval 2–135 (ESTLGSDLSR…LTNLVERLEQ (134 aa)). A DNA-binding region (H-T-H motif) is located at residues 49 to 72 (QIQLAKAIGIEQPSLVRTLDQLED).

It belongs to the SlyA family. Homodimer.

Transcription regulator that can specifically activate or repress expression of target genes. The chain is Transcriptional regulator SlyA from Edwardsiella tarda.